The primary structure comprises 177 residues: Nucleoside triphosphate/diphosphate phosphatase (177 aa).

Residue Arg-23 is the Proton donor of the active site. Mg(2+)-binding residues include Asn-87, Asp-103, Asp-105, Asp-107, Asp-120, and Glu-123.

The protein belongs to the Ntdp family. Mg(2+) is required as a cofactor.

The catalysed reaction is a ribonucleoside 5'-triphosphate + H2O = a ribonucleoside 5'-diphosphate + phosphate + H(+). The enzyme catalyses a ribonucleoside 5'-diphosphate + H2O = a ribonucleoside 5'-phosphate + phosphate + H(+). In terms of biological role, has nucleoside phosphatase activity towards nucleoside triphosphates and nucleoside diphosphates. The chain is Nucleoside triphosphate/diphosphate phosphatase from Streptococcus pyogenes serotype M3 (strain ATCC BAA-595 / MGAS315).